Here is a 162-residue protein sequence, read N- to C-terminus: RNA pyrophosphohydrolase (162 aa).

The Nudix hydrolase domain maps to proline 11–alanine 155. Positions glycine 45 to glycine 66 match the Nudix box motif.

It belongs to the Nudix hydrolase family. RppH subfamily. It depends on a divalent metal cation as a cofactor.

Accelerates the degradation of transcripts by removing pyrophosphate from the 5'-end of triphosphorylated RNA, leading to a more labile monophosphorylated state that can stimulate subsequent ribonuclease cleavage. The chain is RNA pyrophosphohydrolase from Cereibacter sphaeroides (strain ATCC 17023 / DSM 158 / JCM 6121 / CCUG 31486 / LMG 2827 / NBRC 12203 / NCIMB 8253 / ATH 2.4.1.) (Rhodobacter sphaeroides).